Reading from the N-terminus, the 1015-residue chain is DExH-box ATP-dependent RNA helicase DExH8 (1015 aa).

The 162-residue stretch at 36 to 197 (IDKILENRVT…FKELGRGERV (162 aa)) folds into the Helicase ATP-binding domain. 49–56 (GEPGCGKS) contributes to the ATP binding site. Residues 144–147 (DEVH) carry the DEVH box motif. The 166-residue stretch at 254-419 (LIHDLILYIH…KLSLRQQVLH (166 aa)) folds into the Helicase C-terminal domain. 2 consecutive C3H1-type zinc fingers follow at residues 727 to 753 (YGEAPVCVYFLNGYCNRGGQCTFTHTL) and 754 to 782 (QSTRPACKFFASSQGCRNGESCLFSHAMR).

It belongs to the DExH box helicase family.

The enzyme catalyses ATP + H2O = ADP + phosphate + H(+). The protein is DExH-box ATP-dependent RNA helicase DExH8 of Arabidopsis thaliana (Mouse-ear cress).